A 912-amino-acid polypeptide reads, in one-letter code: Putative respiratory burst oxidase homolog protein J (912 aa).

Disordered regions lie at residues Met-1–Ile-51 and Trp-73–Ser-112. Topologically, residues Met-1–Glu-323 are cytoplasmic. Composition is skewed to polar residues over residues Ser-29 to Ser-44 and Asn-78 to Ser-87. EF-hand-like regions lie at residues Ala-147–Asp-155 and Arg-181–Gln-193. The 36-residue stretch at Asp-205–Ala-240 folds into the EF-hand domain. Residues Asp-218, Asp-220, Asp-222, Lys-224, and Glu-229 each contribute to the Ca(2+) site. At Ser-294 the chain carries Phosphoserine. A helical membrane pass occupies residues His-324 to Trp-344. At Lys-345–Cys-363 the chain is on the extracellular side. Residues Ala-364–Leu-384 traverse the membrane as a helical segment. One can recognise a Ferric oxidoreductase domain in the interval Lys-366–Ile-523. The Cytoplasmic segment spans residues Arg-385 to Lys-410. The helical transmembrane segment at Leu-411 to Asn-431 threads the bilayer. Topologically, residues Tyr-432–Tyr-458 are extracellular. The helical transmembrane segment at Leu-459–Ile-479 threads the bilayer. Over Ser-480 to Tyr-510 the chain is Cytoplasmic. Residues Ala-511 to Ile-531 traverse the membrane as a helical segment. At Glu-532 to Gln-697 the chain is on the extracellular side. Residues Glu-562–Ser-695 enclose the FAD-binding FR-type domain. The helical transmembrane segment at Lys-698 to Leu-718 threads the bilayer. The Cytoplasmic portion of the chain corresponds to Lys-719–Phe-912.

This sequence belongs to the RBOH (TC 5.B.1.3) family. Monomer and homodimer.

It is found in the membrane. Calcium-dependent NADPH oxidase that generates superoxide. The protein is Putative respiratory burst oxidase homolog protein J (RBOHJ) of Arabidopsis thaliana (Mouse-ear cress).